Here is a 174-residue protein sequence, read N- to C-terminus: MDYFTLFGLPARYLIDGNQLTTRYQELQRQFHPDRFATQPERERLASMQQAATINDAYQTLKHPLKRAEYMLSLQGFDLGNEQHTMRDTAFLMEQLELREELDAIERKPDAETLLAEFSRRLAQMTTTRTQQMVEQLDAQLWVQAADTVRKLRFLDKLQQQVEQLEERLFDDFA.

The J domain maps to 2-74 (DYFTLFGLPA…LKRAEYMLSL (73 aa)).

The protein belongs to the HscB family. Interacts with HscA and stimulates its ATPase activity. Interacts with IscU.

In terms of biological role, co-chaperone involved in the maturation of iron-sulfur cluster-containing proteins. Seems to help targeting proteins to be folded toward HscA. This chain is Co-chaperone protein HscB, found in Yersinia pseudotuberculosis serotype O:1b (strain IP 31758).